The following is a 39-amino-acid chain: ENFFKEIERAGQRIRDAIISAAPAVETLAQAQKIIKGGD.

Hemolymph.

It localises to the secreted. Cecropins have lytic and antibacterial activity against several Gram-positive and Gram-negative bacteria. Has antibacterial activity against the Gram-positive bacteria M.luteus (MIC=34.4 uM), L.monocytogenes (MIC=34.4 uM), and S.lutea (MIC=34.4 uM), and the Gram-negative bacterium E.coli D31 (MIC=8.6 uM). Lacks antibacterial activity against the Gram-positive bacterium B.circulans, and the Gram-negative bacteria E.coli ATCC 25922 and S.typhimurium. Has antifungal activity against A.niger, but lacks antifungal activity against C.albicans, C.wickerhamii, F.oxysporum, P.pastoris, P.tannophilus, S.cerevisiae, T.harzianum, and Z.marxianus. This chain is Cecropin-D-like peptide, found in Galleria mellonella (Greater wax moth).